We begin with the raw amino-acid sequence, 182 residues long: Ribosome-recycling factor (182 aa).

It belongs to the RRF family.

It localises to the cytoplasm. Responsible for the release of ribosomes from messenger RNA at the termination of protein biosynthesis. May increase the efficiency of translation by recycling ribosomes from one round of translation to another. The protein is Ribosome-recycling factor of Gloeobacter violaceus (strain ATCC 29082 / PCC 7421).